The primary structure comprises 360 residues: Peptide chain release factor 1 (360 aa).

Residue Gln235 is modified to N5-methylglutamine.

The protein belongs to the prokaryotic/mitochondrial release factor family. Methylated by PrmC. Methylation increases the termination efficiency of RF1.

It localises to the cytoplasm. Functionally, peptide chain release factor 1 directs the termination of translation in response to the peptide chain termination codons UAG and UAA. This is Peptide chain release factor 1 from Cupriavidus taiwanensis (strain DSM 17343 / BCRC 17206 / CCUG 44338 / CIP 107171 / LMG 19424 / R1) (Ralstonia taiwanensis (strain LMG 19424)).